A 359-amino-acid chain; its full sequence is Ribosomal RNA large subunit methyltransferase M (359 aa).

S-adenosyl-L-methionine-binding positions include S186, 219–222 (CPGG), D238, D258, and D275. Catalysis depends on K304, which acts as the Proton acceptor.

The protein belongs to the class I-like SAM-binding methyltransferase superfamily. RNA methyltransferase RlmE family. RlmM subfamily. In terms of assembly, monomer.

The protein resides in the cytoplasm. The catalysed reaction is cytidine(2498) in 23S rRNA + S-adenosyl-L-methionine = 2'-O-methylcytidine(2498) in 23S rRNA + S-adenosyl-L-homocysteine + H(+). In terms of biological role, catalyzes the 2'-O-methylation at nucleotide C2498 in 23S rRNA. This is Ribosomal RNA large subunit methyltransferase M from Vibrio parahaemolyticus serotype O3:K6 (strain RIMD 2210633).